A 475-amino-acid chain; its full sequence is ATP synthase subunit beta (475 aa).

G152–T159 is an ATP binding site.

The protein belongs to the ATPase alpha/beta chains family. In terms of assembly, F-type ATPases have 2 components, CF(1) - the catalytic core - and CF(0) - the membrane proton channel. CF(1) has five subunits: alpha(3), beta(3), gamma(1), delta(1), epsilon(1). CF(0) has three main subunits: a(1), b(2) and c(9-12). The alpha and beta chains form an alternating ring which encloses part of the gamma chain. CF(1) is attached to CF(0) by a central stalk formed by the gamma and epsilon chains, while a peripheral stalk is formed by the delta and b chains.

It localises to the cell inner membrane. The catalysed reaction is ATP + H2O + 4 H(+)(in) = ADP + phosphate + 5 H(+)(out). Its function is as follows. Produces ATP from ADP in the presence of a proton gradient across the membrane. The catalytic sites are hosted primarily by the beta subunits. This Wolbachia sp. subsp. Drosophila simulans (strain wRi) protein is ATP synthase subunit beta.